The sequence spans 367 residues: GDP-perosamine synthase (367 aa).

Lys-181 bears the N6-(pyridoxal phosphate)lysine mark.

Belongs to the DegT/DnrJ/EryC1 family. Homotetramer. Pyridoxal 5'-phosphate serves as cofactor.

It catalyses the reaction GDP-alpha-D-perosamine + 2-oxoglutarate = GDP-4-dehydro-alpha-D-rhamnose + L-glutamate. It functions in the pathway bacterial outer membrane biogenesis; LPS O-antigen biosynthesis. Functionally, catalyzes the synthesis of GDP-perosamine from GDP-4-keto-6-deoxy-D-mannose and L-glutamate. Also shows weak activity with L-glutamine. This Vibrio cholerae protein is GDP-perosamine synthase.